The sequence spans 145 residues: D-aminoacyl-tRNA deacylase (145 aa).

The Gly-cisPro motif, important for rejection of L-amino acids signature appears at 137–138; the sequence is GP.

This sequence belongs to the DTD family. Homodimer.

The protein localises to the cytoplasm. The enzyme catalyses glycyl-tRNA(Ala) + H2O = tRNA(Ala) + glycine + H(+). It catalyses the reaction a D-aminoacyl-tRNA + H2O = a tRNA + a D-alpha-amino acid + H(+). An aminoacyl-tRNA editing enzyme that deacylates mischarged D-aminoacyl-tRNAs. Also deacylates mischarged glycyl-tRNA(Ala), protecting cells against glycine mischarging by AlaRS. Acts via tRNA-based rather than protein-based catalysis; rejects L-amino acids rather than detecting D-amino acids in the active site. By recycling D-aminoacyl-tRNA to D-amino acids and free tRNA molecules, this enzyme counteracts the toxicity associated with the formation of D-aminoacyl-tRNA entities in vivo and helps enforce protein L-homochirality. This chain is D-aminoacyl-tRNA deacylase, found in Cereibacter sphaeroides (strain ATCC 17029 / ATH 2.4.9) (Rhodobacter sphaeroides).